A 336-amino-acid polypeptide reads, in one-letter code: DNA repair protein XRCC4 (336 aa).

Residues Met1–Gly213 are interaction with IFFO1. The residue at position 53 (Ser53) is a Phosphoserine; by PRKDC. Coiled coils occupy residues Leu131–Cys165 and Leu184–Glu212. Residues Phe180 to Gly213 form an interaction with LIG4 region. Ser193 is modified (phosphoserine; by PRKDC). Lys210 participates in a covalent cross-link: Glycyl lysine isopeptide (Lys-Gly) (interchain with G-Cter in SUMO). The disordered stretch occupies residues Glu212–Ala249. Tyr229 carries the post-translational modification Phosphotyrosine. Over residues Tyr229–Asn239 the composition is skewed to acidic residues. Ser232 carries the post-translational modification Phosphoserine. Thr233 carries the post-translational modification Phosphothreonine; by CK2. Residues Ser237 and Ser256 each carry the phosphoserine modification. A Phosphoserine; by PRKDC modification is found at Ser260. The segment at Thr264–Ile336 is disordered. The Nuclear localization signal signature appears at Arg270–Arg275. A Glycyl lysine isopeptide (Lys-Gly) (interchain with G-Cter in ubiquitin) cross-link involves residue Lys296. Phosphoserine; by PRKDC is present on residues Ser303, Ser304, Ser315, and Ser320. Polar residues predominate over residues Glu317–Pro329. A Phosphothreonine; by PRKDC modification is found at Thr323. Residues Ser327 and Ser328 each carry the phosphoserine; by PRKDC modification.

The protein belongs to the XRCC4-XLF family. XRCC4 subfamily. In terms of assembly, homodimer and homotetramer in solution. Interacts with NHEJ1/XLF; the interaction is direct and is mediated via a head-to-head interaction between N-terminal head regions. Interacts with LIG4; the LIG4-XRCC4 subcomplex has a 1:2 stoichiometry and XRCC4 is required for LIG4 stability. Component of the core long-range non-homologous end joining (NHEJ) complex (also named DNA-PK complex) composed of PRKDC, LIG4, XRCC4, XRCC6/Ku70, XRCC5/Ku86 and NHEJ1/XLF. Additional component of the NHEJ complex includes PAXX. Following autophosphorylation, PRKDC dissociates from DNA, leading to formation of the short-range NHEJ complex, composed of LIG4, XRCC4, XRCC6/Ku70, XRCC5/Ku86 and NHEJ1/XLF. Interacts with PRKDC; the interaction is direct. Interacts with XRCC6/Ku70; the interaction is direct. Interacts with APTX and APLF. Forms a heterotetramer with IFFO1; the interaction involves LIG4-free XRCC4 and leads to the relocalization of IFFO1 to the sites of DNA damage. Interacts with PNKP; mainly interacts with PNKP when phosphorylated at Thr-233, but is also able to interact at much lower level with PNKP when not unphosphorylated. Interacts with POLL (DNA polymerase lambda). Interacts with XKR4; interacts with the processed form of XKR4, which is cleaved by caspase. In terms of processing, phosphorylated by PRKDC at the C-terminus in response to DNA damage; Ser-260 and Ser-320 constitute the main phosphorylation sites. Phosphorylations by PRKDC at the C-terminus of XRCC4 and NHEJ1/XLF are highly redundant and regulate ability of the XRCC4-NHEJ1/XLF subcomplex to bridge DNA. Phosphorylation by PRKDC does not prevent interaction with NHEJ1/XLF but disrupts ability to bridge DNA and promotes detachment from DNA. Phosphorylation at Ser-327 and Ser-328 by PRKDC promotes recognition by the SCF(FBXW7) complex and subsequent ubiquitination via 'Lys-63'-linked ubiquitin. Phosphorylation at Thr-233 by CK2 promotes interaction with PNKP; regulating PNKP activity and localization to DNA damage sites. Phosphorylation by CK2 promotes interaction with APTX. Post-translationally, ubiquitinated at Lys-296 by the SCF(FBXW7) complex via 'Lys-63'-linked ubiquitination, thereby promoting double-strand break repair: the SCF(FBXW7) complex specifically recognizes XRCC4 when phosphorylated at Ser-327 and Ser-328 by PRKDC, and 'Lys-63'-linked ubiquitination facilitates DNA non-homologous end joining (NHEJ) by enhancing association with XRCC5/Ku80 and XRCC6/Ku70. Monoubiquitinated. Undergoes proteolytic processing by caspase-3 (CASP3). This generates the protein XRCC4, C-terminus (XRCC4/C), which translocates to the cytoplasm and activates phospholipid scramblase activity of XKR4, thereby promoting phosphatidylserine exposure on apoptotic cell surface. As to expression, widely expressed.

The protein resides in the nucleus. It localises to the chromosome. The protein localises to the cytoplasm. Functionally, DNA non-homologous end joining (NHEJ) core factor, required for double-strand break repair and V(D)J recombination. Acts as a scaffold protein that regulates recruitment of other proteins to DNA double-strand breaks (DSBs). Associates with NHEJ1/XLF to form alternating helical filaments that bridge DNA and act like a bandage, holding together the broken DNA until it is repaired. The XRCC4-NHEJ1/XLF subcomplex binds to the DNA fragments of a DSB in a highly diffusive manner and robustly bridges two independent DNA molecules, holding the broken DNA fragments in close proximity to one other. The mobility of the bridges ensures that the ends remain accessible for further processing by other repair factors. Plays a key role in the NHEJ ligation step of the broken DNA during DSB repair via direct interaction with DNA ligase IV (LIG4): the LIG4-XRCC4 subcomplex reseals the DNA breaks after the gap filling is completed. XRCC4 stabilizes LIG4, regulates its subcellular localization and enhances LIG4's joining activity. Binding of the LIG4-XRCC4 subcomplex to DNA ends is dependent on the assembly of the DNA-dependent protein kinase complex DNA-PK to these DNA ends. Promotes displacement of PNKP from processed strand break termini. In terms of biological role, acts as an activator of the phospholipid scramblase activity of XKR4. This form, which is generated upon caspase-3 (CASP3) cleavage, translocates into the cytoplasm and interacts with XKR4, thereby promoting phosphatidylserine scramblase activity of XKR4 and leading to phosphatidylserine exposure on apoptotic cell surface. This chain is DNA repair protein XRCC4, found in Homo sapiens (Human).